The following is a 223-amino-acid chain: Cell division protein SepF (223 aa).

Residues 19–81 (YDDEYYDDRG…YPPPGGYRGG (63 aa)) are disordered. A compositionally biased stretch (basic and acidic residues) spans 36-69 (PRFEDDYGRYEGRDFEDPRRDPRAGMRADLRGEP).

The protein belongs to the SepF family. Homodimer. Interacts with FtsZ.

It localises to the cytoplasm. Its function is as follows. Cell division protein that is part of the divisome complex and is recruited early to the Z-ring. Probably stimulates Z-ring formation, perhaps through the cross-linking of FtsZ protofilaments. Its function overlaps with FtsA. This chain is Cell division protein SepF, found in Mycobacterium ulcerans (strain Agy99).